Here is a 461-residue protein sequence, read N- to C-terminus: MEVIALILAAGQGTRMRSGLPKVLHRIGGLCLLEHVYRLAAALEVRETVIVYGHGGEQALSALGHLPATWIEQKKRRGTGHAVMQAVDRIGDDSTVLVLYGDVPLLRRETVETLLHHAGESSLGLLTVELDNPTGYGRIIRDASGRVLRIVEEKDATPEERAVREVNTGILAVEGAPLKRWLKALRNDNAQGEYYLTDIVAMAVAEGYFIDATHPTSPDEVLGVNDRRQLAELERIYQVHQARALMERGVTLRDPARFDLRGEIVELGRDVEIDVNVILEGRIALGDEVRIGPNVYLKDTVIGPGVAVLANSVIEGAVIGAGSRVGPFARLRPESVLAEGVHIGNFVEVKQSDIAVGSKVNHLSYIGDASIGRGVNVGAGTITCNYDGVAKHRTIIEDGAFIGSDTQLVAPVRVGRNATIGAGSTITRDTPEDCLTLSRARQLSVEGWKRPEKARKESCAE.

The segment at Met1–Arg227 is pyrophosphorylase. Residues Leu8–Gly11, Lys22, Gln73, Gly78–Thr79, Tyr100–Asp102, Gly137, Glu152, Asn167, and Asn225 each bind UDP-N-acetyl-alpha-D-glucosamine. Mg(2+) is bound at residue Asp102. Asn225 is a binding site for Mg(2+). The tract at residues Arg228–Arg248 is linker. The N-acetyltransferase stretch occupies residues Gly249–Glu461. UDP-N-acetyl-alpha-D-glucosamine contacts are provided by Arg332 and Lys350. His362 (proton acceptor) is an active-site residue. Positions 365 and 376 each coordinate UDP-N-acetyl-alpha-D-glucosamine. Acetyl-CoA contacts are provided by residues Ala379, Asn385–Tyr386, Ser404, Ala422, and Arg439.

This sequence in the N-terminal section; belongs to the N-acetylglucosamine-1-phosphate uridyltransferase family. It in the C-terminal section; belongs to the transferase hexapeptide repeat family. Homotrimer. It depends on Mg(2+) as a cofactor.

The protein resides in the cytoplasm. It catalyses the reaction alpha-D-glucosamine 1-phosphate + acetyl-CoA = N-acetyl-alpha-D-glucosamine 1-phosphate + CoA + H(+). The enzyme catalyses N-acetyl-alpha-D-glucosamine 1-phosphate + UTP + H(+) = UDP-N-acetyl-alpha-D-glucosamine + diphosphate. The protein operates within nucleotide-sugar biosynthesis; UDP-N-acetyl-alpha-D-glucosamine biosynthesis; N-acetyl-alpha-D-glucosamine 1-phosphate from alpha-D-glucosamine 6-phosphate (route II): step 2/2. Its pathway is nucleotide-sugar biosynthesis; UDP-N-acetyl-alpha-D-glucosamine biosynthesis; UDP-N-acetyl-alpha-D-glucosamine from N-acetyl-alpha-D-glucosamine 1-phosphate: step 1/1. It participates in bacterial outer membrane biogenesis; LPS lipid A biosynthesis. Its function is as follows. Catalyzes the last two sequential reactions in the de novo biosynthetic pathway for UDP-N-acetylglucosamine (UDP-GlcNAc). The C-terminal domain catalyzes the transfer of acetyl group from acetyl coenzyme A to glucosamine-1-phosphate (GlcN-1-P) to produce N-acetylglucosamine-1-phosphate (GlcNAc-1-P), which is converted into UDP-GlcNAc by the transfer of uridine 5-monophosphate (from uridine 5-triphosphate), a reaction catalyzed by the N-terminal domain. The sequence is that of Bifunctional protein GlmU from Methylococcus capsulatus (strain ATCC 33009 / NCIMB 11132 / Bath).